The following is a 352-amino-acid chain: UDP-N-acetylglucosamine--N-acetylmuramyl-(pentapeptide) pyrophosphoryl-undecaprenol N-acetylglucosamine transferase (352 aa).

Residues 11 to 13, asparagine 120, arginine 161, serine 188, and glutamine 286 each bind UDP-N-acetyl-alpha-D-glucosamine; that span reads TGG.

The protein belongs to the glycosyltransferase 28 family. MurG subfamily.

It localises to the cell inner membrane. The catalysed reaction is di-trans,octa-cis-undecaprenyl diphospho-N-acetyl-alpha-D-muramoyl-L-alanyl-D-glutamyl-meso-2,6-diaminopimeloyl-D-alanyl-D-alanine + UDP-N-acetyl-alpha-D-glucosamine = di-trans,octa-cis-undecaprenyl diphospho-[N-acetyl-alpha-D-glucosaminyl-(1-&gt;4)]-N-acetyl-alpha-D-muramoyl-L-alanyl-D-glutamyl-meso-2,6-diaminopimeloyl-D-alanyl-D-alanine + UDP + H(+). The protein operates within cell wall biogenesis; peptidoglycan biosynthesis. In terms of biological role, cell wall formation. Catalyzes the transfer of a GlcNAc subunit on undecaprenyl-pyrophosphoryl-MurNAc-pentapeptide (lipid intermediate I) to form undecaprenyl-pyrophosphoryl-MurNAc-(pentapeptide)GlcNAc (lipid intermediate II). The protein is UDP-N-acetylglucosamine--N-acetylmuramyl-(pentapeptide) pyrophosphoryl-undecaprenol N-acetylglucosamine transferase of Prochlorococcus marinus (strain NATL2A).